The primary structure comprises 476 residues: Cysteine--tRNA ligase (476 aa).

C27 serves as a coordination point for Zn(2+). Residues I29–H39 carry the 'HIGH' region motif. C213, H238, and E242 together coordinate Zn(2+). The 'KMSKS' region signature appears at K271–S275. Position 274 (K274) interacts with ATP.

This sequence belongs to the class-I aminoacyl-tRNA synthetase family. It depends on Zn(2+) as a cofactor.

Its subcellular location is the cytoplasm. It carries out the reaction tRNA(Cys) + L-cysteine + ATP = L-cysteinyl-tRNA(Cys) + AMP + diphosphate. This is Cysteine--tRNA ligase from Pyrobaculum arsenaticum (strain DSM 13514 / JCM 11321 / PZ6).